The chain runs to 234 residues: uncharacterized protein (234 aa).

A tRNA-binding domain is found at Leu103 to Leu211.

This is an uncharacterized protein from Mycoplasma pneumoniae (strain ATCC 29342 / M129 / Subtype 1) (Mycoplasmoides pneumoniae).